The primary structure comprises 156 residues: Endoribonuclease YbeY (156 aa).

Zn(2+)-binding residues include His-122, His-126, and His-132.

It belongs to the endoribonuclease YbeY family. Zn(2+) is required as a cofactor.

The protein resides in the cytoplasm. Its function is as follows. Single strand-specific metallo-endoribonuclease involved in late-stage 70S ribosome quality control and in maturation of the 3' terminus of the 16S rRNA. The chain is Endoribonuclease YbeY from Bacillus cytotoxicus (strain DSM 22905 / CIP 110041 / 391-98 / NVH 391-98).